The primary structure comprises 383 residues: 3-ketosteroid-9-alpha-monooxygenase, oxygenase component (383 aa).

Positions Trp-24–Val-126 constitute a Rieske domain. [2Fe-2S] cluster contacts are provided by Cys-65, His-67, Cys-84, and His-87. Fe cation contacts are provided by Asn-173, His-179, His-184, and Asp-302.

As to quaternary structure, homotrimer. The two-component system 3-ketosteroid-9-alpha-monooxygenase is composed of an oxygenase component KshA and a reductase component KshB. Requires [2Fe-2S] cluster as cofactor. Fe cation serves as cofactor.

It catalyses the reaction androsta-1,4-diene-3,17-dione + 2 reduced [2Fe-2S]-[ferredoxin] + O2 + 2 H(+) = 9alpha-hydroxyandrosta-1,4-diene-3,17-dione + 2 oxidized [2Fe-2S]-[ferredoxin] + H2O. The protein operates within lipid metabolism; steroid biosynthesis. Its function is as follows. Involved in the degradation of cholesterol. Catalyzes the introduction of a 9a-hydroxyl moiety into 1,4-androstadiene-3,17-dione (ADD) to yield the 9alpha-hydroxy-1,4-androstadiene-3,17-dione (9OHADD) intermediate which spontaneously form 3-hydroxy-9,10-seconandrost-1,3,5(10)-triene-9,17-dione (HSA) via the meta-cleavage of ring B with concomitant aromatization of ring A. This chain is 3-ketosteroid-9-alpha-monooxygenase, oxygenase component (kshA), found in Mycolicibacterium smegmatis (strain ATCC 700084 / mc(2)155) (Mycobacterium smegmatis).